Reading from the N-terminus, the 165-residue chain is UPF0303 protein Rleg2_2653 (165 aa).

Belongs to the UPF0303 family.

The polypeptide is UPF0303 protein Rleg2_2653 (Rhizobium leguminosarum bv. trifolii (strain WSM2304)).